Reading from the N-terminus, the 366-residue chain is GTPase Obg (366 aa).

The Obg domain maps to 1–162; the sequence is MRFVDEAVIK…KSLRLELKIL (162 aa). A disordered region spans residues 125–150; that stretch reads RGGKGNEHFKSSTMQAPRFSQPGEPG. The 173-residue stretch at 163-335 folds into the OBG-type G domain; it reads ADAGLLGLPN…VVSEMWRMLA (173 aa). GTP contacts are provided by residues 169–176, 194–198, 218–221, 288–291, and 316–318; these read GLPNAGKS, FTTLV, DIPG, NKID, and SAL. Positions 176 and 196 each coordinate Mg(2+).

This sequence belongs to the TRAFAC class OBG-HflX-like GTPase superfamily. OBG GTPase family. Monomer. Mg(2+) is required as a cofactor.

It is found in the cytoplasm. Its function is as follows. An essential GTPase which binds GTP, GDP and possibly (p)ppGpp with moderate affinity, with high nucleotide exchange rates and a fairly low GTP hydrolysis rate. Plays a role in control of the cell cycle, stress response, ribosome biogenesis and in those bacteria that undergo differentiation, in morphogenesis control. This chain is GTPase Obg, found in Oleidesulfovibrio alaskensis (strain ATCC BAA-1058 / DSM 17464 / G20) (Desulfovibrio alaskensis).